We begin with the raw amino-acid sequence, 23 residues long: Phospholipase A1 verutoxin-1 (23 aa).

It belongs to the AB hydrolase superfamily. Lipase family. Post-translationally, contains six disulfide bonds. Expressed by the venom gland.

The protein resides in the secreted. The catalysed reaction is a 1,2-diacyl-sn-glycero-3-phosphocholine + H2O = a 2-acyl-sn-glycero-3-phosphocholine + a fatty acid + H(+). It carries out the reaction 1-(9Z-octadecenoyl)-2-hexadecanoyl-sn-glycero-3-phosphocholine + H2O = 2-hexadecanoyl-sn-glycero-3-phosphocholine + (9Z)-octadecenoate + H(+). It catalyses the reaction a 1-acyl-sn-glycero-3-phosphocholine + H2O = sn-glycerol 3-phosphocholine + a fatty acid + H(+). It participates in phospholipid metabolism. Its activity is regulated as follows. Activity is maximal in the presence of calcium. However, unlike phospholipases A2 whose catalytic activity is strictly calcium-dependent, this enzyme shows considerable catalytic activity on phosphatidylcholine emulsified in calcium free solution; the catalytic activity of VT-1 assayed in the absence of calcium ions is 18-20% of that assayed in solution containing calcium ions. Catalyzes the hydrolysis of glycerophospholipids such as phosphatidylcholine (1,2-diacyl-sn-glycero-3-phosphocholine) and has a moderate activity to hydrolyze lysoglycerophospholipids such as lysophosphatidylcholine (1-acyl-sn-glycero-3-phosphocholine), but is unable to hydrolyze sphingomyelin. Liberates the fatty acid from the sn-1 position of 1,2-diacyl-sn-glycero-3-phosphocholine mainly, indicating phospholipase activity of the A1 type. In addition to acting as an allergen, it possesses a moderate hemolytic activity on red blood cells of mice (3% of hemolysis at 3.0 ug/ml). This chain is Phospholipase A1 verutoxin-1, found in Vespa velutina (Asian yellow-legged hornet).